Here is a 332-residue protein sequence, read N- to C-terminus: Methionine synthase (332 aa).

His211, Cys213, and Cys296 together coordinate Zn(2+).

The protein belongs to the archaeal MetE family. Zn(2+) is required as a cofactor.

Its pathway is amino-acid biosynthesis; L-methionine biosynthesis via de novo pathway. Functionally, catalyzes the transfer of a methyl group to L-homocysteine resulting in methionine formation. The physiological methyl donor is unknown. The chain is Methionine synthase from Saccharolobus solfataricus (strain ATCC 35092 / DSM 1617 / JCM 11322 / P2) (Sulfolobus solfataricus).